Reading from the N-terminus, the 576-residue chain is Arginine--tRNA ligase (576 aa).

The short motif at 128 to 136 is the 'HIGH' region element; that stretch reads PTGPMHIGH.

It belongs to the class-I aminoacyl-tRNA synthetase family. Monomer.

It localises to the cytoplasm. It catalyses the reaction tRNA(Arg) + L-arginine + ATP = L-arginyl-tRNA(Arg) + AMP + diphosphate. The protein is Arginine--tRNA ligase of Rickettsia conorii (strain ATCC VR-613 / Malish 7).